The following is a 919-amino-acid chain: Isoleucine--tRNA ligase (919 aa).

A 'HIGH' region motif is present at residues 57-67 (PYANGDIHMGT). Glu552 serves as a coordination point for L-isoleucyl-5'-AMP. The 'KMSKS' region motif lies at 593–597 (KMSKS). ATP is bound at residue Lys596. Residues Cys886, Cys889, Cys906, and Cys909 each contribute to the Zn(2+) site.

The protein belongs to the class-I aminoacyl-tRNA synthetase family. IleS type 1 subfamily. Monomer. The cofactor is Zn(2+).

It is found in the cytoplasm. It catalyses the reaction tRNA(Ile) + L-isoleucine + ATP = L-isoleucyl-tRNA(Ile) + AMP + diphosphate. Functionally, catalyzes the attachment of isoleucine to tRNA(Ile). As IleRS can inadvertently accommodate and process structurally similar amino acids such as valine, to avoid such errors it has two additional distinct tRNA(Ile)-dependent editing activities. One activity is designated as 'pretransfer' editing and involves the hydrolysis of activated Val-AMP. The other activity is designated 'posttransfer' editing and involves deacylation of mischarged Val-tRNA(Ile). This is Isoleucine--tRNA ligase from Petrotoga mobilis (strain DSM 10674 / SJ95).